A 119-amino-acid polypeptide reads, in one-letter code: Hemerythrin subunit A (119 aa).

Fe cation contacts are provided by histidine 26, histidine 55, glutamate 59, histidine 74, histidine 78, histidine 107, and aspartate 112.

It belongs to the hemerythrin family.

In terms of biological role, hemerythrin is a respiratory protein in blood cells of certain marine worms. The oxygen-binding site in each chain contains two iron atoms. In Sipunculus nudus (Sipunculan worm), this protein is Hemerythrin subunit A.